The chain runs to 300 residues: MTKHFTQIRDLGYQAAWDVLRRAKEMKDSRHRSTLLEGKSAIMLFEKASTRTRVSFETAVHQLGGKTIFMTPAESQLGRSEPLRDTARVLSRYNDLMIVRTFGQEKIDELVEYGSIPVINALTDEGHPCQVMSDMLTIYERTPDLEKVRVAWVGDGNNMANSWIEAAIFFKFELFMAFPEGYEPDRNLLALAMQAGAKIFLTHDPAMAVDGAHYVNTDVWASMGQEEEQKKREKAFAGFCVDDALMAKAAPDARFMHCLPAHRGEEVTEDVFESPASIVWDQAENRLHMQKALIEWVMEG.

Carbamoyl phosphate-binding positions include 49-52, glutamine 76, arginine 100, and 127-130; these read STRT and HPCQ. Residues asparagine 158, aspartate 218, and 222-223 contribute to the L-ornithine site; that span reads SM. Carbamoyl phosphate is bound by residues 258-259 and arginine 286; that span reads CL.

Belongs to the aspartate/ornithine carbamoyltransferase superfamily. OTCase family.

It localises to the cytoplasm. The catalysed reaction is carbamoyl phosphate + L-ornithine = L-citrulline + phosphate + H(+). Its pathway is amino-acid biosynthesis; L-arginine biosynthesis; L-arginine from L-ornithine and carbamoyl phosphate: step 1/3. Reversibly catalyzes the transfer of the carbamoyl group from carbamoyl phosphate (CP) to the N(epsilon) atom of ornithine (ORN) to produce L-citrulline. The polypeptide is Ornithine carbamoyltransferase (Oleidesulfovibrio alaskensis (strain ATCC BAA-1058 / DSM 17464 / G20) (Desulfovibrio alaskensis)).